A 338-amino-acid polypeptide reads, in one-letter code: Electron transfer flavoprotein subunit alpha (338 aa).

275-303 (IYIACAISGAIQPLAGMTGSDCIIAINKD) serves as a coordination point for FAD.

This sequence belongs to the ETF alpha-subunit/FixB family. As to quaternary structure, heterodimer of an alpha and a beta subunit. It depends on FAD as a cofactor.

Its function is as follows. The electron transfer flavoprotein serves as a specific electron acceptor for other dehydrogenases. It transfers the electrons to the main respiratory chain via ETF-ubiquinone oxidoreductase (ETF dehydrogenase). This Megasphaera elsdenii protein is Electron transfer flavoprotein subunit alpha (etfA).